The primary structure comprises 161 residues: Small ribosomal subunit protein uS9 (161 aa).

It belongs to the universal ribosomal protein uS9 family.

This Rickettsia prowazekii (strain Madrid E) protein is Small ribosomal subunit protein uS9 (rpsI).